A 220-amino-acid polypeptide reads, in one-letter code: Response regulator protein TmoT (220 aa).

A Response regulatory domain is found at 21-135; the sequence is VIYIVDDDNA…DLLGAIRTAL (115 aa). D70 carries the post-translational modification 4-aspartylphosphate. Residues 151 to 216 enclose the HTH luxR-type domain; it reads LKASYESLSK…DLVRVTERLK (66 aa). Positions 175–194 form a DNA-binding region, H-T-H motif; the sequence is NKQTALELDISEATVKVHRH.

In terms of processing, phosphorylated by TmoS.

The protein localises to the cytoplasm. Functionally, member of the two-component regulatory system TmoS/TmoT involved in the regulation of toluene degradation. Induces expression of tmoX operon. The protein is Response regulator protein TmoT (tmoT) of Ectopseudomonas mendocina (Pseudomonas mendocina).